The chain runs to 1358 residues: Regulatory protein SIR4 (1358 aa).

Residues 1 to 15 (MPNDNKTPNRSSTPK) show a composition bias toward polar residues. Disordered regions lie at residues 1–98 (MPND…PHSN), 252–277 (SLSVPKVSAGDSGISPEESKARSPGI), 356–466 (HDEK…PPEI), 498–544 (VQGE…ISNG), 677–726 (ASTE…EDEQ), 752–787 (VSDSDDSSSDNDSLTDLESLSSGESNEIKVTNDLDT), and 913–970 (HSQE…ENLS). The segment covering 26-39 (KIPEREEKSNEVKT) has biased composition (basic and acidic residues). Composition is skewed to polar residues over residues 49–66 (KSKNYSRPSTAIHTSPHQ) and 75–96 (HKQLQQPKSSPLKKNNYNSFPH). The span at 373 to 388 (QKMKEDADLKRMEILK) shows a compositional bias: basic and acidic residues. Over residues 428–437 (QENNYNSTSR) the composition is skewed to polar residues. Residues 452 to 464 (KNGENKKIGKRPP) show a composition bias toward basic and acidic residues. A compositionally biased stretch (polar residues) spans 507–517 (RNNTLNVTPSK). At Ser692 the chain carries Phosphoserine. Positions 706-720 (FPVSLSQPSKKSFAN) are enriched in polar residues. Acidic residues predominate over residues 754 to 766 (DSDDSSSDNDSLT). The span at 777-787 (NEIKVTNDLDT) shows a compositional bias: basic and acidic residues. Over residues 916–932 (EQNSSSAKPSQIPTVSS) the composition is skewed to polar residues. Lys1128 is covalently cross-linked (Glycyl lysine isopeptide (Lys-Gly) (interchain with G-Cter in SUMO)). A coiled-coil region spans residues 1271 to 1347 (LSFVDIVLSK…DAKINKLMEK (77 aa)).

In terms of assembly, homodimer. Interacts with MPS3. Interacts with RIS1. Interacts with SIR1, SIR2 and SIR3. Interacts with YKU80. Interacts with UBP10. Interacts with RAP1 (via C-terminus).

It localises to the nucleus. The proteins SIR1 through SIR4 are required for transcriptional repression of the silent mating type loci, HML and HMR. The proteins SIR2 through SIR4 repress mulitple loci by modulating chromatin structure. Involves the compaction of chromatin fiber into a more condensed form. The chain is Regulatory protein SIR4 (SIR4) from Saccharomyces cerevisiae (strain ATCC 204508 / S288c) (Baker's yeast).